Here is a 258-residue protein sequence, read N- to C-terminus: tRNA pseudouridine synthase A (258 aa).

The Nucleophile role is filled by Asp54. Position 112 (Tyr112) interacts with substrate.

It belongs to the tRNA pseudouridine synthase TruA family. Homodimer.

It catalyses the reaction uridine(38/39/40) in tRNA = pseudouridine(38/39/40) in tRNA. Its function is as follows. Formation of pseudouridine at positions 38, 39 and 40 in the anticodon stem and loop of transfer RNAs. In Geobacillus kaustophilus (strain HTA426), this protein is tRNA pseudouridine synthase A.